The following is a 263-amino-acid chain: MVSQFLVSQLELEFIAIGGRTHLRRAYSRGALKVLRPFPYGEGLVLQLLTLGPGLMGGDQVEIRVHVAPGAKVILLNQSATKVLPARGYRPVVQRLLFRVEGFLEYYPGLTIPHPASALDQRMEVSLGTEASFSWMEMYALGRLARGEVGKFKWIRARTAIFGQVPFYMDALELLPEELGPNHPGVLEGHPYLVCGFWNWESHPFFEETENGLLGVGLTAFRHSFLRGIGNKEVTQRALKIWSQERALRGLPAVDVMRYSSAL.

Belongs to the UreD family. UreD, UreF and UreG form a complex that acts as a GTP-hydrolysis-dependent molecular chaperone, activating the urease apoprotein by helping to assemble the nickel containing metallocenter of UreC. The UreE protein probably delivers the nickel.

The protein resides in the cytoplasm. Functionally, required for maturation of urease via the functional incorporation of the urease nickel metallocenter. The sequence is that of Urease accessory protein UreD 1 from Synechococcus sp. (strain JA-3-3Ab) (Cyanobacteria bacterium Yellowstone A-Prime).